Here is a 238-residue protein sequence, read N- to C-terminus: 14-3-3 family protein artA (238 aa).

Belongs to the 14-3-3 family.

14-3-3 family protein that plays a role in the morphological differentiation and secondary metabolism biosynthesis. Required for normal fungal morphogenesis in an environment-dependent manner, affecting the balance between production of conidiophores and the formation of sclerotia, resistant structures that are necessary for the dissemination and survival. Acts as a positive regulator of conidiation and a negative regulator of sclerotial production. Also regulates the production of secondary metabolites such as aflatoxin, but also the indole-tetramic acid mycotoxin cyclopiazonic acid (CPA) and ustiloxin, an inhibitor of microtubule assembly. The sequence is that of 14-3-3 family protein artA from Aspergillus flavus (strain ATCC 200026 / FGSC A1120 / IAM 13836 / NRRL 3357 / JCM 12722 / SRRC 167).